Consider the following 221-residue polypeptide: Deep sea actinoporin Cjtox II (221 aa).

A signal peptide spans 1 to 19; the sequence is MNRLIIVCLVAAMIYSTIA. A propeptide spanning residues 20 to 42 is cleaved from the precursor; that stretch reads LPMKEDISNDERPISVNEEPVKK. Serine 96, valine 129, serine 147, proline 149, tyrosine 175, tyrosine 179, and tyrosine 180 together coordinate phosphocholine. Residues 147-162 are trp-rich region, which is important for the binding to lipid membrane; the sequence is SVPYDYNWYENWWNIK. The Cell attachment site, crucial for protein stability signature appears at 186–188; that stretch reads KGD.

Belongs to the actinoporin family. Sea anemone subfamily. In terms of assembly, octamer or nonamer in membranes. Monomer in the soluble state. In terms of tissue distribution, expressed in actinopharynx and in gastric filaments. Is not expressed in tentacles.

The protein localises to the secreted. The protein resides in the nematocyst. It localises to the target cell membrane. Functionally, may be involved in digestion of prey. Pore-forming protein that forms cations-selective hydrophilic pores of around 1 nm and causes cytolysis. Pore formation is a multi-step process that involves specific recognition of membrane sphingomyelin (but neither cholesterol nor phosphatidylcholine) using aromatic rich region and adjacent phosphocholine (POC) binding site, firm binding to the membrane (mainly driven by hydrophobic interactions) accompanied by the transfer of the N-terminal region to the lipid-water interface and finally pore formation after oligomerization of monomers. Shows hemolytic activity on equine erythrocytes. Hemolysis is highly inhibited in presence of sphingomyelin, suggesting that this protein targets sphingomyelin. The polypeptide is Deep sea actinoporin Cjtox II (Cribrinopsis japonica (Deep-sea anemone)).